A 102-amino-acid polypeptide reads, in one-letter code: Large ribosomal subunit protein bL21 (102 aa).

Positions 79–91 (RKDSKRKKGHRQP) are enriched in basic residues. Residues 79–102 (RKDSKRKKGHRQPYTKLTIDKINA) form a disordered region.

The protein belongs to the bacterial ribosomal protein bL21 family. In terms of assembly, part of the 50S ribosomal subunit. Contacts protein L20.

This protein binds to 23S rRNA in the presence of protein L20. This Staphylococcus saprophyticus subsp. saprophyticus (strain ATCC 15305 / DSM 20229 / NCIMB 8711 / NCTC 7292 / S-41) protein is Large ribosomal subunit protein bL21.